A 554-amino-acid chain; its full sequence is Undecaprenyl phosphate-alpha-4-amino-4-deoxy-L-arabinose arabinosyl transferase (554 aa).

The next 11 helical transmembrane spans lie at 4–24 (LKGS…LLPI), 87–107 (FGSI…ATLL), 115–135 (FLAA…SYAV), 178–198 (FMTK…PIVI), 206–226 (LIIF…PWAL), 262–282 (YLPI…AALL), 293–313 (ELFF…VAKG), 315–335 (LPTY…AYAT), 352–372 (INLI…MGWV), 384–404 (QKVI…FATM), and 410–430 (HWHW…YLIP).

It belongs to the glycosyltransferase 83 family.

Its subcellular location is the cell inner membrane. The enzyme catalyses 4-amino-4-deoxy-alpha-L-arabinopyranosyl di-trans,octa-cis-undecaprenyl phosphate + lipid IVA = lipid IIA + di-trans,octa-cis-undecaprenyl phosphate.. Its pathway is lipopolysaccharide metabolism; 4-amino-4-deoxy-beta-L-arabinose-lipid A biosynthesis. Functionally, catalyzes the transfer of the L-Ara4N moiety of the glycolipid undecaprenyl phosphate-alpha-L-Ara4N to lipid A. The modified arabinose is attached to lipid A and is required for resistance to polymyxin and cationic antimicrobial peptides. The sequence is that of Undecaprenyl phosphate-alpha-4-amino-4-deoxy-L-arabinose arabinosyl transferase from Yersinia enterocolitica serotype O:8 / biotype 1B (strain NCTC 13174 / 8081).